The sequence spans 354 residues: Rhodopsin (354 aa).

The Extracellular segment spans residues 1–36; that stretch reads MNGTEGPDFYVPMVNTTGIVRSPYDYPQYYLVNPAA. 2 N-linked (GlcNAc...) asparagine glycosylation sites follow: N2 and N15. Residues 37 to 61 traverse the membrane as a helical segment; that stretch reads FSMLAAYMFFLILVGFPVNFLTLYV. The Cytoplasmic portion of the chain corresponds to 62 to 73; sequence TMEHKKLRTPLN. A helical membrane pass occupies residues 74 to 96; sequence YILLNLAVANLFMVIGGFTTTMY. Topologically, residues 97–110 are extracellular; it reads TSMHGYFVLGRTGC. C110 and C187 are oxidised to a cystine. Residues 111 to 133 traverse the membrane as a helical segment; it reads NLEGFFATLGGEIALWSLVVLAV. The 'Ionic lock' involved in activated form stabilization signature appears at 134 to 136; sequence ERW. Topologically, residues 134 to 152 are cytoplasmic; it reads ERWVVVCKPISNFRFGENH. The helical transmembrane segment at 153-173 threads the bilayer; that stretch reads AVMGVSFTWLMACACSVPPLF. Residues 174–202 lie on the Extracellular side of the membrane; it reads GWSRYIPEGMQCSCGIDYYTRAPGYNNES. Residues 203 to 224 form a helical membrane-spanning segment; the sequence is FVIYMFVCHFSIPLTIIFFCYG. The Cytoplasmic segment spans residues 225 to 252; it reads RLLCAVKDAAAAQQESETTQRAEREVSR. Residues 253-274 form a helical membrane-spanning segment; sequence MVVIMVIGFLICWLPYASVAWF. Residues 275-286 are Extracellular-facing; sequence IFTHQGSEFGPV. A helical transmembrane segment spans residues 287–308; the sequence is FMTIPAFFAKSSAIYNPMIYIC. Position 296 is an N6-(retinylidene)lysine (K296). The Cytoplasmic segment spans residues 309-354; that stretch reads MNKQFRHCMITTLCCGKNPFEEEEGASTTASKTEASSVSSSHVSPA. Residues C322 and C323 are each lipidated (S-palmitoyl cysteine). The tract at residues 333 to 354 is disordered; sequence GASTTASKTEASSVSSSHVSPA. Residues 334–354 are compositionally biased toward low complexity; the sequence is ASTTASKTEASSVSSSHVSPA.

Belongs to the G-protein coupled receptor 1 family. Opsin subfamily. In terms of processing, phosphorylated on some or all of the serine and threonine residues present in the C-terminal region. Contains one covalently linked retinal chromophore.

It is found in the membrane. The protein localises to the cell projection. Its subcellular location is the cilium. It localises to the photoreceptor outer segment. Its function is as follows. Photoreceptor required for image-forming vision at low light intensity. While most salt water fish species use retinal as chromophore, most freshwater fish use 3-dehydroretinal, or a mixture of retinal and 3-dehydroretinal. Light-induced isomerization of 11-cis to all-trans retinal triggers a conformational change that activates signaling via G-proteins. Subsequent receptor phosphorylation mediates displacement of the bound G-protein alpha subunit by arrestin and terminates signaling. In Zeus faber (John Dory), this protein is Rhodopsin (rho).